Reading from the N-terminus, the 392-residue chain is Imidazolonepropionase (392 aa).

The Fe(3+) site is built by H69 and H71. Residues H69 and H71 each coordinate Zn(2+). Residues R78, Y136, and H163 each coordinate 4-imidazolone-5-propanoate. Y136 is a binding site for N-formimidoyl-L-glutamate. Residue H226 participates in Fe(3+) binding. Residue H226 coordinates Zn(2+). 4-imidazolone-5-propanoate is bound at residue Q229. Residue D302 participates in Fe(3+) binding. D302 is a Zn(2+) binding site. N-formimidoyl-L-glutamate-binding residues include N304 and G306. S307 provides a ligand contact to 4-imidazolone-5-propanoate.

It belongs to the metallo-dependent hydrolases superfamily. HutI family. Requires Zn(2+) as cofactor. It depends on Fe(3+) as a cofactor.

It localises to the cytoplasm. The catalysed reaction is 4-imidazolone-5-propanoate + H2O = N-formimidoyl-L-glutamate. It functions in the pathway amino-acid degradation; L-histidine degradation into L-glutamate; N-formimidoyl-L-glutamate from L-histidine: step 3/3. Its function is as follows. Catalyzes the hydrolytic cleavage of the carbon-nitrogen bond in imidazolone-5-propanoate to yield N-formimidoyl-L-glutamate. It is the third step in the universal histidine degradation pathway. In Salinispora tropica (strain ATCC BAA-916 / DSM 44818 / JCM 13857 / NBRC 105044 / CNB-440), this protein is Imidazolonepropionase.